A 185-amino-acid chain; its full sequence is Dual-action ribosomal maturation protein DarP (185 aa).

Positions Met-1–Arg-22 are disordered.

It belongs to the DarP family.

The protein localises to the cytoplasm. In terms of biological role, member of a network of 50S ribosomal subunit biogenesis factors which assembles along the 30S-50S interface, preventing incorrect 23S rRNA structures from forming. Promotes peptidyl transferase center (PTC) maturation. The chain is Dual-action ribosomal maturation protein DarP from Xylella fastidiosa (strain 9a5c).